Here is a 312-residue protein sequence, read N- to C-terminus: Ribosomal protein L11 methyltransferase (312 aa).

The S-adenosyl-L-methionine site is built by Thr-162, Gly-183, Asp-205, and Asn-248.

Belongs to the methyltransferase superfamily. PrmA family.

Its subcellular location is the cytoplasm. It catalyses the reaction L-lysyl-[protein] + 3 S-adenosyl-L-methionine = N(6),N(6),N(6)-trimethyl-L-lysyl-[protein] + 3 S-adenosyl-L-homocysteine + 3 H(+). Functionally, methylates ribosomal protein L11. The sequence is that of Ribosomal protein L11 methyltransferase from Geobacillus thermodenitrificans (strain NG80-2).